The primary structure comprises 509 residues: ATP synthase subunit alpha (509 aa).

169-176 (GDRQTGKT) contributes to the ATP binding site.

The protein belongs to the ATPase alpha/beta chains family. As to quaternary structure, F-type ATPases have 2 components, CF(1) - the catalytic core - and CF(0) - the membrane proton channel. CF(1) has five subunits: alpha(3), beta(3), gamma(1), delta(1), epsilon(1). CF(0) has three main subunits: a(1), b(2) and c(9-12). The alpha and beta chains form an alternating ring which encloses part of the gamma chain. CF(1) is attached to CF(0) by a central stalk formed by the gamma and epsilon chains, while a peripheral stalk is formed by the delta and b chains.

It is found in the cell inner membrane. It catalyses the reaction ATP + H2O + 4 H(+)(in) = ADP + phosphate + 5 H(+)(out). Produces ATP from ADP in the presence of a proton gradient across the membrane. The alpha chain is a regulatory subunit. The polypeptide is ATP synthase subunit alpha (Novosphingobium aromaticivorans (strain ATCC 700278 / DSM 12444 / CCUG 56034 / CIP 105152 / NBRC 16084 / F199)).